Reading from the N-terminus, the 482-residue chain is Serine carboxypeptidase-like 36 (482 aa).

The first 25 residues, 1-25 (MGKRQDWSVTACIFLFLSLASQIHC), serve as a signal peptide directing secretion. 3 cysteine pairs are disulfide-bonded: Cys119–Cys363, Cys275–Cys286, and Cys310–Cys331. Ser210 is a catalytic residue. Asn228 carries N-linked (GlcNAc...) asparagine glycosylation. Residues Asn312 and Asn352 are each glycosylated (N-linked (GlcNAc...) asparagine). Asp402 is a catalytic residue. 2 N-linked (GlcNAc...) asparagine glycosylation sites follow: Asn418 and Asn444. His455 is an active-site residue.

The protein belongs to the peptidase S10 family. In terms of tissue distribution, expressed in seedlings, flowers and siliques.

Its subcellular location is the secreted. Its function is as follows. Probable carboxypeptidase. This Arabidopsis thaliana (Mouse-ear cress) protein is Serine carboxypeptidase-like 36 (SCPL36).